Reading from the N-terminus, the 104-residue chain is V-type ATP synthase subunit F (104 aa).

Belongs to the V-ATPase F subunit family.

Functionally, produces ATP from ADP in the presence of a proton gradient across the membrane. This is V-type ATP synthase subunit F from Thermus thermophilus (strain ATCC BAA-163 / DSM 7039 / HB27).